We begin with the raw amino-acid sequence, 516 residues long: GMP synthase [glutamine-hydrolyzing] (516 aa).

One can recognise a Glutamine amidotransferase type-1 domain in the interval 8 to 198; that stretch reads KILILDFGSQ…ALNICKCDAL (191 aa). The active-site Nucleophile is the C84. Catalysis depends on residues H172 and E174. The GMPS ATP-PPase domain occupies 199 to 391; it reads WNIENIIEND…LGLPYNMLYR (193 aa). 226 to 232 serves as a coordination point for ATP; sequence SGGVDSS.

As to quaternary structure, homodimer.

It catalyses the reaction XMP + L-glutamine + ATP + H2O = GMP + L-glutamate + AMP + diphosphate + 2 H(+). The protein operates within purine metabolism; GMP biosynthesis; GMP from XMP (L-Gln route): step 1/1. In terms of biological role, catalyzes the synthesis of GMP from XMP. This chain is GMP synthase [glutamine-hydrolyzing], found in Francisella philomiragia subsp. philomiragia (strain ATCC 25017 / CCUG 19701 / FSC 153 / O#319-036).